Consider the following 200-residue polypeptide: Isochorismatase family protein 2A (200 aa).

The protein belongs to the isochorismatase family.

The polypeptide is Isochorismatase family protein 2A (Dictyostelium discoideum (Social amoeba)).